A 953-amino-acid chain; its full sequence is Kinesin-like protein KIF23 (953 aa).

Positions 7-11 (KTVRK) match the Nuclear localization signal motif. Residues 25–436 (PVGVYCRVRP…MRFAEVTQEV (412 aa)) enclose the Kinesin motor domain. 112-119 (GVTGSGKT) lines the ATP pocket. 2 positions are modified to phosphoserine: S155 and S160. A coiled-coil region spans residues 542–618 (QEKLNEREKV…RRLEARLQGM (77 aa)). Residues K572 and K587 each participate in a glycyl lysine isopeptide (Lys-Gly) (interchain with G-Cter in SUMO2) cross-link. S606 carries the post-translational modification Phosphoserine. Glycyl lysine isopeptide (Lys-Gly) (interchain with G-Cter in SUMO2) cross-links involve residues K625, K648, K663, and K666. The disordered stretch occupies residues 658–695 (IVTEPKPEKPERPSRERDREKIIPRSVSPSPLPLSSNN). Over residues 662–680 (PKPEKPERPSRERDREKII) the composition is skewed to basic and acidic residues. Low complexity predominate over residues 681 to 693 (PRSVSPSPLPLSS). Residues S683 and S685 each carry the phosphoserine modification. T739 is subject to Phosphothreonine. Phosphoserine is present on S807. Residues K816 and K847 each participate in a glycyl lysine isopeptide (Lys-Gly) (interchain with G-Cter in SUMO2) cross-link. Position 860 is a phosphoserine (S860). Glycyl lysine isopeptide (Lys-Gly) (interchain with G-Cter in SUMO2) cross-links involve residues K867, K870, and K892. 2 disordered regions span residues 894 to 921 (ELPT…EWTD) and 934 to 953 (AGSQ…RKKP). Residue S904 is modified to Phosphoserine. At T920 the chain carries Phosphothreonine. K949 is covalently cross-linked (Glycyl lysine isopeptide (Lys-Gly) (interchain with G-Cter in SUMO2)).

It belongs to the TRAFAC class myosin-kinesin ATPase superfamily. Kinesin family. As to quaternary structure, heterotetramer of two molecules each of RACGAP1 and KIF23. Found in the centralspindlin complex. Interacts with RACGAP1; the interaction is direct. Interacts with ECT2 and PRC1. Interacts with ANXA11 during cytokinesis. Interacts with BIRC6/bruce and USP8/UBPY. Interacts with ARF6, forming heterodimers and heterotetramers. In terms of processing, ubiquitinated. Deubiquitinated by USP8/UBPY. As to expression, detected in testis and ovary from newborn mice (at protein level). Detected in brain, spinal cord and small intestine.

It localises to the nucleus. The protein resides in the cytoplasm. The protein localises to the cytoskeleton. It is found in the spindle. Its subcellular location is the midbody. It localises to the midbody ring. In terms of biological role, component of the centralspindlin complex that serves as a microtubule-dependent and Rho-mediated signaling required for the myosin contractile ring formation during the cell cycle cytokinesis. Essential for cytokinesis in Rho-mediated signaling. Required for the localization of ECT2 to the central spindle. Plus-end-directed motor enzyme that moves antiparallel microtubules in vitro. The sequence is that of Kinesin-like protein KIF23 (Kif23) from Mus musculus (Mouse).